Consider the following 358-residue polypeptide: tRNA-specific 2-thiouridylase MnmA (358 aa).

Residues 8-15 (AMSGGVDS) and Met-35 contribute to the ATP site. The segment at 95–97 (NPD) is interaction with target base in tRNA. The active-site Nucleophile is Cys-100. A disulfide bridge links Cys-100 with Cys-194. Gly-124 serves as a coordination point for ATP. The interaction with tRNA stretch occupies residues 144 to 146 (KDQ). The active-site Cysteine persulfide intermediate is the Cys-194. Residues 301–302 (RY) form an interaction with tRNA region.

Belongs to the MnmA/TRMU family.

The protein resides in the cytoplasm. The catalysed reaction is S-sulfanyl-L-cysteinyl-[protein] + uridine(34) in tRNA + AH2 + ATP = 2-thiouridine(34) in tRNA + L-cysteinyl-[protein] + A + AMP + diphosphate + H(+). Catalyzes the 2-thiolation of uridine at the wobble position (U34) of tRNA, leading to the formation of s(2)U34. In Chlamydia trachomatis serovar D (strain ATCC VR-885 / DSM 19411 / UW-3/Cx), this protein is tRNA-specific 2-thiouridylase MnmA.